We begin with the raw amino-acid sequence, 101 residues long: UPF0473 protein SUB1774 (101 aa).

The protein belongs to the UPF0473 family.

The sequence is that of UPF0473 protein SUB1774 from Streptococcus uberis (strain ATCC BAA-854 / 0140J).